The following is a 477-amino-acid chain: Pup--protein ligase (477 aa).

A Mg(2+)-binding site is contributed by Glu16. An ATP-binding site is contributed by Arg60. Residue Tyr62 coordinates Mg(2+). Asp64 acts as the Proton acceptor in catalysis. Position 70 (Glu70) interacts with Mg(2+). Positions 73 and 441 each coordinate ATP.

This sequence belongs to the Pup ligase/Pup deamidase family. Pup-conjugating enzyme subfamily.

It carries out the reaction ATP + [prokaryotic ubiquitin-like protein]-L-glutamate + [protein]-L-lysine = ADP + phosphate + N(6)-([prokaryotic ubiquitin-like protein]-gamma-L-glutamyl)-[protein]-L-lysine.. It participates in protein degradation; proteasomal Pup-dependent pathway. The protein operates within protein modification; protein pupylation. Its function is as follows. Catalyzes the covalent attachment of the prokaryotic ubiquitin-like protein modifier Pup to the proteasomal substrate proteins, thereby targeting them for proteasomal degradation. This tagging system is termed pupylation. The ligation reaction involves the side-chain carboxylate of the C-terminal glutamate of Pup and the side-chain amino group of a substrate lysine. The protein is Pup--protein ligase of Corynebacterium kroppenstedtii (strain DSM 44385 / JCM 11950 / CIP 105744 / CCUG 35717).